The primary structure comprises 919 residues: Phosphoenolpyruvate carboxylase (919 aa).

Catalysis depends on residues H138 and K579.

Belongs to the PEPCase type 1 family. Mg(2+) serves as cofactor.

It catalyses the reaction oxaloacetate + phosphate = phosphoenolpyruvate + hydrogencarbonate. Its function is as follows. Forms oxaloacetate, a four-carbon dicarboxylic acid source for the tricarboxylic acid cycle. The protein is Phosphoenolpyruvate carboxylase of Corynebacterium glutamicum (Brevibacterium saccharolyticum).